Reading from the N-terminus, the 246-residue chain is Flavin-dependent thymidylate synthase (246 aa).

The 225-residue stretch at 17–241 (ITVELVKSAA…PLTHAAFNAN (225 aa)) folds into the ThyX domain. Residues S69, 92 to 94 (RHR), and E101 contribute to the FAD site. DUMP is bound by residues 89 to 92 (EFMR), 101 to 105 (EESGR), and R173. The ThyX motif motif lies at 92–103 (RHRVGWSYNEES). Residues 189–191 (NAR) and H195 contribute to the FAD site. R200 contributes to the dUMP binding site. Catalysis depends on R200, which acts as the Involved in ionization of N3 of dUMP, leading to its activation.

The protein belongs to the thymidylate synthase ThyX family. Homotetramer. FAD is required as a cofactor.

It carries out the reaction dUMP + (6R)-5,10-methylene-5,6,7,8-tetrahydrofolate + NADPH + H(+) = dTMP + (6S)-5,6,7,8-tetrahydrofolate + NADP(+). Its pathway is pyrimidine metabolism; dTTP biosynthesis. Catalyzes the reductive methylation of 2'-deoxyuridine-5'-monophosphate (dUMP) to 2'-deoxythymidine-5'-monophosphate (dTMP) while utilizing 5,10-methylenetetrahydrofolate (mTHF) as the methyl donor, and NADPH and FADH(2) as the reductant. The polypeptide is Flavin-dependent thymidylate synthase (Streptomyces coelicolor (strain ATCC BAA-471 / A3(2) / M145)).